Consider the following 157-residue polypeptide: Nucleoside deoxyribosyltransferase (157 aa).

The Nucleophile role is filled by Glu98.

It belongs to the nucleoside deoxyribosyltransferase family. Homohexamer.

It carries out the reaction 2-deoxy-D-ribosyl-base(1) + base(2) = 2-deoxy-D-ribosyl-base(2) + base(1).. The protein operates within nucleotide metabolism; nucleotide salvage pathway. Functionally, catalyzes the cleavage of the glycosidic bond of 2'-deoxyribonucleosides and the transfer of the deoxyribosyl moiety to an acceptor purine or pyrimidine base. In Lactobacillus leichmannii, this protein is Nucleoside deoxyribosyltransferase (ntd).